Here is a 433-residue protein sequence, read N- to C-terminus: Adenylosuccinate synthetase (433 aa).

Residues 13-19 and 41-43 contribute to the GTP site; these read GDEGKGK and GHT. Residue Asp-14 is the Proton acceptor of the active site. Mg(2+) contacts are provided by Asp-14 and Gly-41. IMP contacts are provided by residues 14 to 17, 39 to 42, Thr-130, Arg-144, Gln-225, Thr-240, and Arg-304; these read DEGK and NAGH. The Proton donor role is filled by His-42. Residue 300–306 participates in substrate binding; it reads STTGRKR. Residues Arg-306, 332-334, and 414-416 contribute to the GTP site; these read KLD and STG.

Belongs to the adenylosuccinate synthetase family. Homodimer. Requires Mg(2+) as cofactor.

The protein resides in the cytoplasm. The catalysed reaction is IMP + L-aspartate + GTP = N(6)-(1,2-dicarboxyethyl)-AMP + GDP + phosphate + 2 H(+). It functions in the pathway purine metabolism; AMP biosynthesis via de novo pathway; AMP from IMP: step 1/2. In terms of biological role, plays an important role in the de novo pathway of purine nucleotide biosynthesis. Catalyzes the first committed step in the biosynthesis of AMP from IMP. This chain is Adenylosuccinate synthetase, found in Buchnera aphidicola subsp. Acyrthosiphon pisum (strain APS) (Acyrthosiphon pisum symbiotic bacterium).